We begin with the raw amino-acid sequence, 641 residues long: Macrolide export ATP-binding/permease protein MacB (641 aa).

The 235-residue stretch at 2–236 (IFLKNICKNI…LILKTMPKEK (235 aa)) folds into the ABC transporter domain. Residue 34-41 (GQSGSGKT) participates in ATP binding. 4 helical membrane-spanning segments follow: residues 265-285 (ILTM…VALG), 519-539 (ACVA…IMLV), 571-591 (MICT…IFAF), and 604-624 (AYSV…FGFF).

It belongs to the ABC transporter superfamily. Macrolide exporter (TC 3.A.1.122) family. Homodimer.

It is found in the cell inner membrane. Non-canonical ABC transporter that contains transmembrane domains (TMD), which form a pore in the inner membrane, and an ATP-binding domain (NBD), which is responsible for energy generation. Confers resistance against macrolides. In Campylobacter jejuni subsp. jejuni serotype O:2 (strain ATCC 700819 / NCTC 11168), this protein is Macrolide export ATP-binding/permease protein MacB.